The chain runs to 201 residues: 3-isopropylmalate dehydratase small subunit (201 aa).

This sequence belongs to the LeuD family. LeuD type 1 subfamily. As to quaternary structure, heterodimer of LeuC and LeuD.

It carries out the reaction (2R,3S)-3-isopropylmalate = (2S)-2-isopropylmalate. The protein operates within amino-acid biosynthesis; L-leucine biosynthesis; L-leucine from 3-methyl-2-oxobutanoate: step 2/4. In terms of biological role, catalyzes the isomerization between 2-isopropylmalate and 3-isopropylmalate, via the formation of 2-isopropylmaleate. This is 3-isopropylmalate dehydratase small subunit from Escherichia coli O9:H4 (strain HS).